A 904-amino-acid chain; its full sequence is MRGGGLICALVVGALVAAVASAAPAAPAAPRASGGVAATVAANGGPASRPPPVPSPATTKARKRKTKKPPKRPEATPPPDANATVAAGHATLRAHLREIKVENADAQFYVCPPPTGATVVQFEQPRRCPTRPEGQNYTEGIAVVFKENIAPYKFKATMYYKDVTVSQVWFGHRYSQFMGIFEDRAPVPFEEVIDKINTKGVCRSTAKYVRNNMETTAFHRDDHETDMELKPAKVATRTSRGWHTTDLKYNPSRVEAFHRYGTTVNCIVEEVDARSVYPYDEFVLATGDFVYMSPFYGYREGSHTEHTSYAADRFKQVDGFYARDLTTKARATSPTTRNLLTTPKFTVAWDWVPKRPAVCTMTKWQEVDEMLRAEYGGSFRFSSDAISTTFTTNLTEYSLSRVDLGDCIGRDAREAIDRMFARKYNATHIKVGQPQYYLATGGFLIAYQPLLSNTLAELYVREYMREQDRKPRNATPAPLREAPSANASVERIKTTSSIEFARLQFTYNHIQRHVNDMLGRIAVAWCELQNHELTLWNEARKLNPNAIASATVGRRVSARMLGDVMAVSTCVPVAPDNVIVQNSMRVSSRPGTCYSRPLVSFRYEDQGPLIEGQLGENNELRLTRDALEPCTVGHRRYFIFGGGYVYFEEYAYSHQLSRADVTTVSTFIDLNITMLEDHEFVPLEVYTRHEIKDSGLLDYTEVQRRNQLHDLRFADIDTVIRADANAAMFAGLCAFFEGMGDLGRAVGKVVMGVVGGVVSAVSGVSSFMSNPFGALAVGLLVLAGLVAAFFAFRYVLQLQRNPMKALYPLTTKELKTSDPGGVGGEGEEGAEGGGFDEAKLAEAREMIRYMALVSAMERTEHKARKKGTSALLSSKVTNMVLRKRNKARYSPLHNEDEAGDEDEL.

An N-terminal signal peptide occupies residues 1-22 (MRGGGLICALVVGALVAAVASA). The Virion surface portion of the chain corresponds to 23 to 771 (APAAPAAPRA…SGVSSFMSNP (749 aa)). The segment at 40–83 (VAANGGPASRPPPVPSPATTKARKRKTKKPPKRPEATPPPDANA) is disordered. Positions 60–70 (KARKRKTKKPP) are enriched in basic residues. N-linked (GlcNAc...) asparagine; by host glycans are attached at residues N82 and N136. 5 disulfides stabilise this stretch: C111–C570, C128–C526, C202–C266, C359–C407, and C593–C630. Involved in fusion and/or binding to host membrane regions lie at residues 168–174 (VWFGHRY) and 253–260 (RVEAFHRY). N393, N425, and N486 each carry an N-linked (GlcNAc...) asparagine; by host glycan. The tract at residues 467-490 (QDRKPRNATPAPLREAPSANASVE) is disordered. Residue N671 is glycosylated (N-linked (GlcNAc...) asparagine; by host). Hydrophobic membrane proximal region stretches follow at residues 716-769 (IDTV…SFMS) and 728-768 (MFAG…SSFM). Residues 772–792 (FGALAVGLLVLAGLVAAFFAF) traverse the membrane as a helical segment. Over 793–904 (RYVLQLQRNP…EDEAGDEDEL (112 aa)) the chain is Intravirion. The interval 816–835 (TSDPGGVGGEGEEGAEGGGF) is disordered. The short motif at 849 to 852 (YMAL) is the Golgi targeting element. The tract at residues 883–904 (KRNKARYSPLHNEDEAGDEDEL) is disordered. Residues 889-892 (YSPL) carry the Internalization motif motif.

The protein belongs to the herpesviridae glycoprotein B family. As to quaternary structure, homotrimer; disulfide-linked. Binds to heparan sulfate proteoglycans. Interacts with gH/gL heterodimer.

The protein resides in the virion membrane. It localises to the host cell membrane. The protein localises to the host endosome membrane. Its subcellular location is the host Golgi apparatus membrane. Envelope glycoprotein that forms spikes at the surface of virion envelope. Essential for the initial attachment to heparan sulfate moieties of the host cell surface proteoglycans. Involved in fusion of viral and cellular membranes leading to virus entry into the host cell. Following initial binding to its host receptors, membrane fusion is mediated by the fusion machinery composed at least of gB and the heterodimer gH/gL. May be involved in the fusion between the virion envelope and the outer nuclear membrane during virion egress. In Homo sapiens (Human), this protein is Envelope glycoprotein B.